Reading from the N-terminus, the 147-residue chain is Ribosome-binding factor A (147 aa).

Residues 126 to 147 (LKKNAQPAGDAHPYKDDDAMND) form a disordered region. The span at 137–147 (HPYKDDDAMND) shows a compositional bias: basic and acidic residues.

This sequence belongs to the RbfA family. As to quaternary structure, monomer. Binds 30S ribosomal subunits, but not 50S ribosomal subunits or 70S ribosomes.

Its subcellular location is the cytoplasm. In terms of biological role, one of several proteins that assist in the late maturation steps of the functional core of the 30S ribosomal subunit. Associates with free 30S ribosomal subunits (but not with 30S subunits that are part of 70S ribosomes or polysomes). Required for efficient processing of 16S rRNA. May interact with the 5'-terminal helix region of 16S rRNA. This is Ribosome-binding factor A from Corynebacterium diphtheriae (strain ATCC 700971 / NCTC 13129 / Biotype gravis).